The sequence spans 456 residues: E3 ubiquitin-protein ligase RNF25 (456 aa).

Residues S18–N127 enclose the RWD domain. Zn(2+) is bound by residues C134, C137, C152, H154, H157, C160, C195, and C198. The RING-type zinc-finger motif lies at C134 to R199. Residues L269–S456 form a disordered region. Residues S288 to S332 are compositionally biased toward polar residues. Composition is skewed to basic and acidic residues over residues S364–N388 and R410–K421.

The protein belongs to the RNF25 family. As to quaternary structure, interacts with UBE2D2, and may also interact with UBE2E1 and UBE2E3. Interacts with RELA/p65. Post-translationally, ubiquitinated; autoubiquitinated. In terms of tissue distribution, ubiquitous.

It localises to the cytoplasm. It carries out the reaction S-ubiquitinyl-[E2 ubiquitin-conjugating enzyme]-L-cysteine + [acceptor protein]-L-lysine = [E2 ubiquitin-conjugating enzyme]-L-cysteine + N(6)-ubiquitinyl-[acceptor protein]-L-lysine.. Its pathway is protein modification; protein ubiquitination. Its function is as follows. E3 ubiquitin-protein ligase that plays a key role in the RNF14-RNF25 translation quality control pathway, a pathway that takes place when a ribosome has stalled during translation, and which promotes ubiquitination and degradation of translation factors on stalled ribosomes. Catalyzes ubiquitination of RPS27A in response to ribosome collisions, promoting activation of RNF14. RNF25 catalyzes ubiquitination of other ribosomal proteins on stalled ribosomes, such as RPL0, RPL1, RPL12, RPS13 and RPS17. Also involved in ubiquitination and degradation of stalled ETF1/eRF1. Independently of its function in the response to stalled ribosomes, mediates ubiquitination and subsequent proteasomal degradation of NKD2. May also stimulate transcription mediated by NF-kappa-B via its interaction with RELA/p65. This chain is E3 ubiquitin-protein ligase RNF25, found in Mus musculus (Mouse).